The chain runs to 3010 residues: Genome polyprotein (3010 aa).

N-acetylserine; by host is present on Ser2. Positions 2 to 23 (STNPKPQRKTKRNTYRRPQDVK) are interaction with STAT1. Residues 2 to 58 (STNPKPQRKTKRNTYRRPQDVKFPGGGQIVGGVYVLPRRGPTLGVRATRKTSERSQP) form an interaction with EIF2AK2/PKR region. Positions 2-59 (STNPKPQRKTKRNTYRRPQDVKFPGGGQIVGGVYVLPRRGPTLGVRATRKTSERSQPR) are interaction with DDX3X. The segment at 2-75 (STNPKPQRKT…PKARRPEGRA (74 aa)) is disordered. The Cytoplasmic segment spans residues 2–168 (STNPKPQRKT…EDGVNYATGN (167 aa)). 2 short sequence motifs (nuclear localization signal) span residues 5 to 13 (PKPQRKTKR) and 38 to 43 (PRRGPT). The segment covering 7-16 (PQRKTKRNTY) has biased composition (basic residues). Position 53 is a phosphoserine; by host (Ser53). Short sequence motifs (nuclear localization signal) lie at residues 58–64 (PRGRRQP) and 66–71 (PKARRP). Positions 58-68 (PRGRRQPIPKA) are enriched in basic residues. Phosphoserine; by host is present on Ser99. Residues 112–152 (PRRRSRNLGKVIDTLTCGFADLMGYIPLVGAPLGGAARALA) form an important for endoplasmic reticulum and mitochondrial localization region. Residue Ser116 is modified to Phosphoserine; by host PKA. Residues 122–173 (VIDTLTCGFADLMGYIPLVGAPLGGAARALAHGVRVLEDGVNYATGNLPGCS) form an interaction with APOA2 region. Residues 164–167 (YATG) are important for lipid droplets localization. The helical transmembrane segment at 169-189 (LPGCSFSIFLLALLSCLTIPA) threads the bilayer. The propeptide at 178–191 (LLALLSCLTIPASA) is ER anchor for the core protein, removed in mature form by host signal peptidase. Residues 190-358 (SAYQVRNASG…AGAHWGVLAG (169 aa)) are Lumenal-facing. 4 N-linked (GlcNAc...) asparagine; by host glycosylation sites follow: Asn196, Asn209, Asn234, and Asn250. The interval 265–296 (LVGAAAFCSAMYVGDLCGSVFLVSQLFTFSPR) is important for fusion. Residue Asn305 is glycosylated (N-linked (GlcNAc...) asparagine; by host). The helical transmembrane segment at 359–379 (LAYYSMVGNWAKVLIVMLLFA) threads the bilayer. The Lumenal segment spans residues 380–725 (GVDGVTYTTG…WEYIVLLFLL (346 aa)). The interval 385 to 411 (TYTTGGSQARHTQSVTSFFTQGPAQRI) is HVR1. 4 N-linked (GlcNAc...) (high mannose) asparagine; by host glycosylation sites follow: Asn417, Asn423, Asn430, and Asn448. Disulfide bonds link Cys429–Cys552, Cys452–Cys459, Cys486–Cys494, and Cys503–Cys508. Residues 474 to 479 (YTEPRD) are HVR2. The segment at 480–493 (LDQRPYCWHYAPRQ) is CD81-binding 1. The N-linked (GlcNAc...) (high mannose) asparagine; by host glycan is linked to Asn532. Residue Asn540 is glycosylated (N-linked (GlcNAc...) asparagine; by host). Residues 544-551 (PPQGNWFG) form a CD81-binding 2 region. Asn556 is a glycosylation site (N-linked (GlcNAc...) (high mannose) asparagine; by host). Cys564 and Cys569 are disulfide-bonded. N-linked (GlcNAc...) (high mannose) asparagine; by host glycosylation occurs at Asn576. 3 cysteine pairs are disulfide-bonded: Cys581–Cys585, Cys597–Cys620, and Cys607–Cys644. Asn623 and Asn645 each carry an N-linked (GlcNAc...) (high mannose) asparagine; by host glycan. A disulfide bridge connects residues Cys652 and Cys677. Residues 660–671 (SELSPLLLSTTE) are PKR/eIF2-alpha phosphorylation homology domain (PePHD). The helical transmembrane segment at 726–746 (LADARVCACLWMMLLIAQAEA) threads the bilayer. Residues 747–757 (ALENLVVLNAA) are Lumenal-facing. The helical transmembrane segment at 758–778 (SLAGADGILSFLVFFCAAWYI) threads the bilayer. Residues 779–781 (KGR) are Cytoplasmic-facing. The chain crosses the membrane as a helical span at residues 782–803 (LVPGAAYALYGVWPLLLLLLAL). Residues 804–813 (PPRAYAMDRE) lie on the Lumenal side of the membrane. A helical transmembrane segment spans residues 814–834 (MAASCGGVVFVGLILLTLSPH). The Cytoplasmic portion of the chain corresponds to 835–838 (YKVF). A helical membrane pass occupies residues 839-859 (LARLIWWLQYFITRAEAHLCV). Residues 860–881 (WVPPLNVRGGRDAIILLTCAAH) lie on the Lumenal side of the membrane. Residues 882–902 (PELIFDITKLLLAILGPLMVL) traverse the membrane as a helical segment. Residues 903–1026 (QAAITAMPYF…SIEGQGWRLL (124 aa)) form the Peptidase C18 domain. The Cytoplasmic segment spans residues 903 to 1657 (QAAITAMPYF…CMSADLEVVT (755 aa)). Residues 904 to 1206 (AAITAMPYFV…PVESMETTMR (303 aa)) are protease NS2-3. Cys922 is lipidated: S-palmitoyl cysteine; by host. Positions 929-949 (AGGHYVQMAFMKLAALTGTYV) are interaction with host SCPS1. Catalysis depends on for protease NS2 activity; shared with dimeric partner residues His952, Glu972, and Cys993. Residues 1027 to 1208 (APITAYAQQT…ESMETTMRSP (182 aa)) enclose the Peptidase S29 domain. Residues His1083 and Asp1107 each act as charge relay system; for serine protease NS3 activity in the active site. The Zn(2+) site is built by Cys1123 and Cys1125. Ser1165 acts as the Charge relay system; for serine protease NS3 activity in catalysis. Cys1171 and His1175 together coordinate Zn(2+). Residues 1217–1369 (PAVPQTFQVA…PNIEEVALSN (153 aa)) enclose the Helicase ATP-binding domain. Residue 1230–1237 (APTGSGKS) participates in ATP binding. Mg(2+)-binding residues include Ser1237 and Glu1317. The DECH box motif lies at 1316–1319 (DECH). The RNA-binding stretch occupies residues 1486 to 1497 (QRRGRTGRGRGG). A helical membrane pass occupies residues 1658–1678 (STWVLVGGVLAALAAYCLTTG). Residues 1679–1690 (SVVIVGRIILSG) are NS3-binding. The Cytoplasmic portion of the chain corresponds to 1679 to 1805 (SVVIVGRIIL…SITSPLTTQN (127 aa)). Residues 1806-1824 (TLLFNILGGWVAAQLAPPS) form a helical membrane-spanning segment. The Lumenal segment spans residues 1825–1828 (AASA). A helical membrane pass occupies residues 1829 to 1849 (FVGAGIAGAAIGSIGLGKVLV). A topological domain (cytoplasmic) is located at residue Asp1850. Residues 1851-1871 (ILAGYGAGVAGALVAFKVMSG) traverse the membrane as a helical segment. Over 1872 to 1881 (EAPSAEDLVN) the chain is Lumenal. Residues 1882 to 1902 (LLPAILSPGALVVGVVCAAIL) form a helical membrane-spanning segment. Residues 1903-1972 (RRHVGPGEGA…WINEDCSTPC (70 aa)) lie on the Cytoplasmic side of the membrane. S-palmitoyl cysteine; by host attachment occurs at residues Cys1968 and Cys1972. The stretch at 1973 to 2002 (SGSWLKDVWDWICTVLTDFKTWLQSKLLPK) is an intramembrane region. At 2003–2989 (LPGVPFFSCQ…YHSLSRARPR (987 aa)) the chain is on the cytoplasmic side. The Zn(2+) site is built by Cys2011, Cys2029, Cys2031, and Cys2052. An FKBP8-binding region spans residues 2120–2208 (EFFTELDGVR…ASSSASQLSA (89 aa)). Residues 2120–2332 (EFFTELDGVR…PIPPPRKKRT (213 aa)) are transcriptional activation. An interaction with non-structural protein 4A region spans residues 2135-2139 (PACRP). The tract at residues 2187 to 2220 (KRRLARGSPPSLASSSASQLSAPSLKATCTTHHD) is disordered. An interaction with host SKP2 region spans residues 2189–2441 (RLARGSPPSL…PCAAEESKLP (253 aa)). Phosphoserine; by host; in p56 is present on Ser2194. The segment covering 2194-2211 (SPPSLASSSASQLSAPSL) has biased composition (low complexity). Residues Ser2197, Ser2201, Ser2204, Ser2207, and Ser2210 each carry the phosphoserine; by host; in p58 modification. Residues 2210 to 2249 (SLKATCTTHHDSPDADLIEANLLWRQEMGGNITRVESENK) form an ISDR region. The tract at residues 2210-2275 (SLKATCTTHH…REVSVAAEIL (66 aa)) is interaction with EIF2AK2/PKR. Residues 2249 to 2306 (KVVILDSFDPLRAEEDEREVSVAAEILRKSKKFPPALPIWARPDYNPPLLESWKSPDY) are NS4B-binding. Residues 2322 to 2325 (PPIP) carry the SH3-binding motif. A Nuclear localization signal motif is present at residues 2326-2334 (PPRKKRTVV). Lys2350 is covalently cross-linked (Glycyl lysine isopeptide (Lys-Gly) (interchain with G-Cter in ubiquitin)). Polar residues predominate over residues 2351-2371 (TFGSSGSSAVDSGTATAPPDQ). The interval 2351 to 2408 (TFGSSGSSAVDSGTATAPPDQTSDDGDKESDVESYSSMPPLEGEPGDPDLSDGSWSTV) is disordered. The interval 2354–2377 (SSGSSAVDSGTATAPPDQTSDDGD) is V3. Over residues 2372-2382 (TSDDGDKESDV) the composition is skewed to acidic residues. Phosphoserine; by host is present on residues Ser2448 and Ser2461. One can recognise a RdRp catalytic domain in the interval 2633–2751 (PMGFSYDTRC…ICESAGTQED (119 aa)). Residues Asp2639, Asp2737, and Asp2738 each coordinate Mg(2+). A helical membrane pass occupies residues 2990-3010 (WFMWCLLLLSVGVGIYLLPNR).

Belongs to the hepacivirus polyprotein family. In terms of assembly, homooligomer. Interacts with E1 (via C-terminus). Interacts with the non-structural protein 5A. Interacts (via N-terminus) with host STAT1 (via SH2 domain); this interaction results in decreased STAT1 phosphorylation and ubiquitin-mediated proteasome-dependent STAT1 degradation, leading to decreased IFN-stimulated gene transcription. Interacts with host STAT3; this interaction constitutively activates STAT3. Interacts with host LTBR receptor. Interacts with host TNFRSF1A receptor and possibly induces apoptosis. Interacts with host HNRPK. Interacts with host YWHAE. Interacts with host UBE3A/E6AP. Interacts with host DDX3X. Interacts with host APOA2. Interacts with host RXRA protein. Interacts with host SP110 isoform 3/Sp110b; this interaction sequesters the transcriptional corepressor SP110 away from the nucleus. Interacts with host CREB3 nuclear transcription protein; this interaction triggers cell transformation. Interacts with host ACY3. Interacts with host C1QR1. Interacts with host RBM24; this interaction, which enhances the interaction of the mature core protein with 5'-UTR, may inhibit viral translation and favor replication. Interacts with host EIF2AK2/PKR; this interaction induces the autophosphorylation of EIF2AK2. Part of the viral assembly initiation complex composed of NS2, E1, E2, NS3, NS4A, NS5A and the mature core protein. As to quaternary structure, forms a heterodimer with envelope glycoprotein E2. Interacts with mature core protein. Interacts with protease NS2. The heterodimer E1/E2 interacts with host CLDN1; this interaction plays a role in viral entry into host cell. Interacts with host SPSB2 (via C-terminus). Part of the viral assembly initiation complex composed of NS2, E1, E2, NS3, NS4A, NS5A and the mature core protein. Interacts with host NEURL3; this interaction prevents E1 binding to glycoprotein E2. Forms a heterodimer with envelope glycoprotein E1. Interacts with host CD81 and SCARB1 receptors; these interactions play a role in viral entry into host cell. Interacts with host EIF2AK2/PKR; this interaction inhibits EIF2AK2 and probably allows the virus to evade the innate immune response. Interacts with host CD209/DC-SIGN and CLEC4M/DC-SIGNR. Interact with host SPCS1; this interaction is essential for viral particle assembly. Interacts with protease NS2. The heterodimer E1/E2 interacts with host CLDN1; this interaction plays a role in viral entry into host cell. Part of the viral assembly initiation complex composed of NS2, E1, E2, NS3, NS4A, NS5A and the mature core protein. Interacts with host SLC3A2/4F2hc; the interaction may facilitate viral entry into host cell. Interacts with human PLSCR1. In terms of assembly, homohexamer. Homoheptamer. Interacts with protease NS2. As to quaternary structure, homodimer. Interacts with host SPCS1; this interaction is essential for viral particle assembly. Interacts with envelope glycoprotein E1. Interacts with envelope glycoprotein E2. Interacts with viroporin p7. Interacts with serine protease/helicase NS3. Part of the replication complex composed of NS2, NS3, NS4A, NS4B, NS5A and the RNA-directed RNA polymerase embedded in an ER-derived membranous web. Part of the viral assembly initiation complex composed of NS2, E1, E2, NS3, NS4A, NS5A and the mature core protein. Interacts with protease NS2. Interacts with non-structural protein 4A; this interaction stabilizes the folding of NS3 serine protease. NS3-NS4A interaction is essential for NS3 activation and allows membrane anchorage of the latter. NS3/NS4A complex also prevents phosphorylation of host IRF3, thus preventing the establishment of dsRNA induced antiviral state. Interacts with host MAVS; this interaction leads to the cleavage and inhibition of host MAVS. Interacts with host TICAM1; this interaction leads to the cleavage and inhibition of host TICAM1. Interacts with host TANK-binding kinase/TBK1; this interaction results in the inhibition of the association between TBK1 and IRF3, which leads to the inhibition of IRF3 activation. Interacts with host RBM24. Part of the replication complex composed of NS2, NS3, NS4A, NS4B, NS5A and the RNA-directed RNA polymerase embedded in an ER-derived membranous web. Part of the viral assembly initiation complex composed of NS2, E1, E2, NS3, NS4A, NS5A and the mature core protein. In terms of assembly, interacts with NS3 serine protease; this interaction stabilizes the folding of NS3 serine protease. NS3-NS4A interaction is essential for NS3 activation and allows membrane anchorage of the latter. Interacts with non-structural protein 5A (via N-terminus). Part of the replication complex composed of NS2, NS3, NS4A, NS4B, NS5A and the RNA-directed RNA polymerase embedded in an ER-derived membranous web. Part of the viral assembly initiation complex composed of NS2, E1, E2, NS3, NS4A, NS5A and the mature core protein. As to quaternary structure, homomultimer. Interacts with non-structural protein NS5A. Interacts with host PLA2G4C; this interaction likely initiates the recruitment of replication complexes to lipid droplets. Interacts with host STING; this interaction disrupts the interaction between STING and TBK1 thereby suppressing the interferon signaling. Part of the replication complex composed of NS2, NS3, NS4A, NS4B, NS5A and the RNA-directed RNA polymerase embedded in an ER-derived membranous web. Monomer. Homodimer; dimerization is required for RNA-binding. Interacts with the mature core protein. Interacts (via N-terminus) with non-structural protein 4A. Interacts with non-structural protein 4B. Interacts (via region D2) with RNA-directed RNA polymerase. Part of the viral assembly initiation complex composed of NS2, E1, E2, NS3, NS4A, NS5A and the mature core protein. Part of the replication complex composed of NS2, NS3, NS4A, NS4B, NS5A and the RNA-directed RNA polymerase embedded in an ER-derived membranous web. Interacts with host GRB2. Interacts with host BIN1. Interacts with host PIK3R1. Interacts with host SRCAP. Interacts with host FKBP8. Interacts (via C-terminus) with host VAPB (via MSP domain). Interacts with host EIF2AK2/PKR; this interaction leads to disruption of EIF2AK2 dimerization by NS5A and probably allows the virus to evade the innate immune response. Interacts (via N-terminus) with host PACSIN2 (via N-terminus); this interaction attenuates protein kinase C alpha-mediated phosphorylation of PACSIN2 by disrupting the interaction between PACSIN2 and PRKCA. Interacts (via N-terminus) with host SRC kinase (via SH2 domain). Interacts with most Src-family kinases. Interacts with host IFI27 and SKP2; promotes the ubiquitin-mediated proteasomal degradation of NS5A. Interacts with host GPS2. Interacts with host TNFRSF21; this interaction allows the modulation by the virus of JNK, p38 MAPK, STAT3, and Akt signaling pathways in a DR6-dependent manner. Interacts (via N-terminus) with host CIDEB (via N-terminus); this interaction seems to regulate the association of HCV particles with APOE. Interacts with host CHKA/Choline Kinase-alpha; CHKA bridges host PI4KA and NS5A and potentiates NS5A-stimulated PI4KA activity, which then facilitates the targeting of the ternary complex to the ER for viral replication. Interacts with host SPSB2 (via C-terminus); this interaction targets NS5A for ubiquitination and degradation. Interacts with host RAB18; this interaction may promote the association of NS5A and other replicase components with lipid droplets. Interacts (via region D2) with host PPIA/CYPA; the interaction stimulates RNA-binding ability of NS5A and is dependent on the peptidyl-prolyl cis-trans isomerase activity of PPIA/CYPA. Interacts with host TRIM14; this interaction induces the degradation of NS5A. In terms of assembly, homooligomer. Interacts with non-structural protein 5A. Interacts with host VAPB. Interacts with host PRK2/PKN2. Interacts with host HNRNPA1 and SEPT6; these interactions facilitate viral replication. Part of the replication complex composed of NS2, NS3, NS4A, NS4B, NS5A and the RNA-directed RNA polymerase. Zn(2+) serves as cofactor. The cofactor is Mg(2+). Post-translationally, specific enzymatic cleavages in vivo yield mature proteins. The structural proteins, core, E1, E2 and p7 are produced by proteolytic processing by host signal peptidases. The core protein precursor is synthesized as a 23 kDa, which is retained in the ER membrane through the hydrophobic signal peptide. Cleavage by the signal peptidase releases the 21 kDa mature core protein. The cleavage of the core protein precursor occurs between aminoacids 176 and 188 but the exact cleavage site is not known. Some degraded forms of the core protein appear as well during the course of infection. The other proteins (p7, NS2, NS3, NS4A, NS4B, NS5A and NS5B) are cleaved by the viral proteases. Autoprocessing between NS2 and NS3 is mediated by the NS2 cysteine protease catalytic domain and regulated by the NS3 N-terminal domain. Phosphorylated by host PKC and PKA. In terms of processing, ubiquitinated; mediated by UBE3A and leading to core protein subsequent proteasomal degradation. Post-translationally, highly N-glycosylated. Palmitoylation is required for NS2/3 autoprocessing and E2 recruitment to membranes. In terms of processing, palmitoylated. This modification may play a role in its polymerization or in protein-protein interactions. Post-translationally, phosphorylated on serines in a basal form termed p56. p58 is a hyperphosphorylated form of p56. p56 and p58 coexist in the cell in roughly equivalent amounts. Hyperphosphorylation is dependent on the presence of NS4A. Host CSNK1A1/CKI-alpha or RPS6KB1 kinases may be responsible for NS5A phosphorylation. Tyrosine phosphorylation is essential for the interaction with host SRC. In terms of processing, ubiquitinated. Ubiquitination, most probably at Lys-2350, mediated by host IFI27 and SKP2 leads to proteasomal degradation, restricting viral infection. Ubiquitination by host TRIM22 leads to interruption of viral replication. Post-translationally, the N-terminus is phosphorylated by host PRK2/PKN2.

Its subcellular location is the host endoplasmic reticulum membrane. It is found in the host mitochondrion membrane. The protein resides in the virion. It localises to the host cytoplasm. The protein localises to the host nucleus. Its subcellular location is the host lipid droplet. It is found in the virion membrane. The protein resides in the host mitochondrion. It localises to the host cell membrane. The protein localises to the host perinuclear region. It carries out the reaction Hydrolysis of four peptide bonds in the viral precursor polyprotein, commonly with Asp or Glu in the P6 position, Cys or Thr in P1 and Ser or Ala in P1'.. The catalysed reaction is a ribonucleoside 5'-triphosphate + H2O = a ribonucleoside 5'-diphosphate + phosphate + H(+). The enzyme catalyses ATP + H2O = ADP + phosphate + H(+). It catalyses the reaction RNA(n) + a ribonucleoside 5'-triphosphate = RNA(n+1) + diphosphate. Its activity is regulated as follows. Inhibited by the antiviral drug hexamethylene amiloride. Inhibition by amantadine appears to be genotype-dependent. Also inhibited by long-alkyl-chain iminosugar derivatives. With respect to regulation, activity is up-regulated by PRK2/PKN2-mediated phosphorylation. In terms of biological role, packages viral RNA to form a viral nucleocapsid, and promotes virion budding. Participates in the viral particle production as a result of its interaction with the non-structural protein 5A. Binds RNA and may function as a RNA chaperone to induce the RNA structural rearrangements taking place during virus replication. Modulates viral translation initiation by interacting with viral IRES and 40S ribosomal subunit. Affects various cell signaling pathways, host immunity and lipid metabolism. Prevents the establishment of cellular antiviral state by blocking the interferon-alpha/beta (IFN-alpha/beta) and IFN-gamma signaling pathways and by blocking the formation of phosphorylated STAT1 and promoting ubiquitin-mediated proteasome-dependent degradation of STAT1. Activates STAT3 leading to cellular transformation. Regulates the activity of cellular genes, including c-myc and c-fos. May repress the promoter of p53, and sequester CREB3 and SP110 isoform 3/Sp110b in the cytoplasm. Represses cell cycle negative regulating factor CDKN1A, thereby interrupting an important check point of normal cell cycle regulation. Targets transcription factors involved in the regulation of inflammatory responses and in the immune response: suppresses TNF-induced NF-kappa-B activation, and activates AP-1. Binds to dendritic cells (DCs) via C1QR1, resulting in down-regulation of T-lymphocytes proliferation. Alters lipid metabolism by interacting with hepatocellular proteins involved in lipid accumulation and storage. Induces up-regulation of FAS promoter activity, and thereby contributes to the increased triglyceride accumulation in hepatocytes (steatosis). Its function is as follows. Forms a heterodimer with envelope glycoprotein E2, which mediates virus attachment to the host cell, virion internalization through clathrin-dependent endocytosis and fusion with host membrane. Fusion with the host cell is most likely mediated by both E1 and E2, through conformational rearrangements of the heterodimer required for fusion rather than a classical class II fusion mechanism. E1/E2 heterodimer binds host apolipoproteins such as APOB and ApoE thereby forming a lipo-viro-particle (LVP). APOE associated to the LVP allows the initial virus attachment to cell surface receptors such as the heparan sulfate proteoglycans (HSPGs), syndecan-1 (SDC1), syndecan-1 (SDC2), the low-density lipoprotein receptor (LDLR) and scavenger receptor class B type I (SCARB1). The cholesterol transfer activity of SCARB1 allows E2 exposure and binding of E2 to SCARB1 and the tetraspanin CD81. E1/E2 heterodimer binding on CD81 activates the epithelial growth factor receptor (EGFR) signaling pathway. Diffusion of the complex E1-E2-EGFR-SCARB1-CD81 to the cell lateral membrane allows further interaction with Claudin 1 (CLDN1) and occludin (OCLN) to finally trigger HCV entry. Forms a heterodimer with envelope glycoprotein E1, which mediates virus attachment to the host cell, virion internalization through clathrin-dependent endocytosis and fusion with host membrane. Fusion with the host cell is most likely mediated by both E1 and E2, through conformational rearrangements of the heterodimer required for fusion rather than a classical class II fusion mechanism. The interaction between envelope glycoprotein E2 and host apolipoprotein E/APOE allows the proper assembly, maturation and infectivity of the viral particles. This interaction is probably promoted via the up-regulation of cellular autophagy by the virus. E1/E2 heterodimer binds host apolipoproteins such as APOB and APOE thereby forming a lipo-viro-particle (LVP). APOE associated to the LVP allows the initial virus attachment to cell surface receptors such as the heparan sulfate proteoglycans (HSPGs), syndecan-1 (SDC1), syndecan-1 (SDC2), the low-density lipoprotein receptor (LDLR) and scavenger receptor class B type I (SCARB1). The cholesterol transfer activity of SCARB1 allows E2 exposure and binding of E2 to SCARB1 and the tetraspanin CD81. E1/E2 heterodimer binding on CD81 activates the epithelial growth factor receptor (EGFR) signaling pathway. Diffusion of the complex E1-E2-EGFR-SCARB1-CD81 to the cell lateral membrane allows further interaction with Claudin 1 (CLDN1) and occludin (OCLN) to finally trigger HCV entry. Inhibits host EIF2AK2/PKR activation, preventing the establishment of an antiviral state. Viral ligand for CD209/DC-SIGN and CLEC4M/DC-SIGNR, which are respectively found on dendritic cells (DCs), and on liver sinusoidal endothelial cells and macrophage-like cells of lymph node sinuses. These interactions allow the capture of circulating HCV particles by these cells and subsequent facilitated transmission to permissive cells such as hepatocytes and lymphocyte subpopulations. The interaction between E2 and host amino acid transporter complex formed by SLC3A2 and SLC7A5/LAT1 may facilitate viral entry into host cell. Functionally, ion channel protein that acts as a viroporin and plays an essential role in the assembly, envelopment and secretion of viral particles. Regulates the host cell secretory pathway, which induces the intracellular retention of viral glycoproteins and favors assembly of viral particles. Creates a pore in acidic organelles and releases Ca(2+) and H(+) in the cytoplasm of infected cells, leading to a productive viral infection. High levels of cytoplasmic Ca(2+) may trigger membrane trafficking and transport of viral ER-associated proteins to viroplasms, sites of viral genome replication. This ionic imbalance induces the assembly of the inflammasome complex, which triggers the maturation of pro-IL-1beta into IL-1beta through the action of caspase-1. Targets also host mitochondria and induces mitochondrial depolarization. In addition of its role as a viroporin, acts as a lipid raft adhesion factor. In terms of biological role, cysteine protease required for the proteolytic auto-cleavage between the non-structural proteins NS2 and NS3. The N-terminus of NS3 is required for the function of NS2 protease (active region NS2-3). Promotes the initiation of viral particle assembly by mediating the interaction between structural and non-structural proteins. Its function is as follows. Displays three enzymatic activities: serine protease with a chymotrypsin-like fold, NTPase and RNA helicase. NS3 serine protease, in association with NS4A, is responsible for the cleavages of NS3-NS4A, NS4A-NS4B, NS4B-NS5A and NS5A-NS5B. The NS3/NS4A complex prevents phosphorylation of host IRF3, thus preventing the establishment of dsRNA induced antiviral state. The NS3/NS4A complex induces host amino acid transporter component SLC3A2, thus contributing to HCV propagation. NS3 RNA helicase binds to RNA and unwinds both dsDNA and dsRNA in the 3' to 5' direction, and likely resolves RNA complicated stable secondary structures in the template strand. Binds a single ATP and catalyzes the unzipping of a single base pair of dsRNA. Inhibits host antiviral proteins TBK1 and IRF3 thereby preventing the establishment of an antiviral state. Cleaves host MAVS/CARDIF thereby preventing the establishment of an antiviral state. Cleaves host TICAM1/TRIF, thereby disrupting TLR3 signaling and preventing the establishment of an antiviral state. Induces a specific membrane alteration that serves as a scaffold for the virus replication complex. This membrane alteration gives rise to the so-called ER-derived membranous web that contains the replication complex. NS4B self-interaction contributes to its function in membranous web formation. Promotes host TRIF protein degradation in a CASP8-dependent manner thereby inhibiting host TLR3-mediated interferon signaling. Disrupts the interaction between STING and TBK1 contributing to the inhibition of interferon signaling. Functionally, phosphorylated protein that is indispensable for viral replication and assembly. Both hypo- and hyperphosphorylated states are required for the viral life cycle. The hyperphosphorylated form of NS5A is an inhibitor of viral replication. Involved in RNA-binding and especially in binding to the viral genome. Zinc is essential for RNA-binding. Participates in the viral particle production as a result of its interaction with the mature viral core protein. Its interaction with host VAPB may target the viral replication complex to vesicles. Down-regulates viral IRES translation initiation. Mediates interferon resistance, presumably by interacting with and inhibiting host EIF2AK2/PKR. Prevents BIN1-induced apoptosis. Acts as a transcriptional activator of some host genes important for viral replication when localized in the nucleus. Via the interaction with host PACSIN2, modulates lipid droplet formation in order to promote virion assembly. Modulates TNFRSF21/DR6 signaling pathway for viral propagation. In terms of biological role, RNA-dependent RNA polymerase that performs primer-template recognition and RNA synthesis during viral replication. Initiates RNA transcription/replication at a flavin adenine dinucleotide (FAD), resulting in a 5'- FAD cap on viral RNAs. In this way, recognition of viral 5' RNA by host pattern recognition receptors can be bypassed, thereby evading activation of antiviral pathways. Its function is as follows. Peptide cofactor which forms a non-covalent complex with the N-terminal of NS3 serine protease. The NS3/NS4A complex prevents phosphorylation of host IRF3, thus preventing the establishment of dsRNA induced antiviral state. The NS3/NS4A complex induces host amino acid transporter component SLC3A2, thus contributing to HCV propagation. The chain is Genome polyprotein from Homo sapiens (Human).